We begin with the raw amino-acid sequence, 718 residues long: DNA topoisomerase 1 (718 aa).

The Toprim domain occupies 9 to 151; it reads HEVIICEKPK…KFSTLTREEI (143 aa). Residues Glu-15 and Asp-113 each contribute to the Mg(2+) site. The region spanning 162–571 is the Topo IA-type catalytic domain; it reads DYGQVDSGAA…EAITEVRSIL (410 aa). Positions 202–207 are interaction with DNA; the sequence is SAGRVQ. The active-site O-(5'-phospho-DNA)-tyrosine intermediate is the Tyr-320. Residues 361–371 are compositionally biased toward basic and acidic residues; the sequence is HEGKKEDDAHP. The disordered stretch occupies residues 361–380; the sequence is HEGKKEDDAHPAIHPTGLLP. C4-type zinc fingers lie at residues 598–626 and 680–706; these read CPACGGKLVIKYSPRNRSTFVGCSSYPDC and CPECGSDLIKRSGRYGEFVGCKGFPKC.

This sequence belongs to the type IA topoisomerase family. In terms of assembly, monomer. Mg(2+) is required as a cofactor.

It carries out the reaction ATP-independent breakage of single-stranded DNA, followed by passage and rejoining.. In terms of biological role, releases the supercoiling and torsional tension of DNA, which is introduced during the DNA replication and transcription, by transiently cleaving and rejoining one strand of the DNA duplex. Introduces a single-strand break via transesterification at a target site in duplex DNA. The scissile phosphodiester is attacked by the catalytic tyrosine of the enzyme, resulting in the formation of a DNA-(5'-phosphotyrosyl)-enzyme intermediate and the expulsion of a 3'-OH DNA strand. The free DNA strand then undergoes passage around the unbroken strand, thus removing DNA supercoils. Finally, in the religation step, the DNA 3'-OH attacks the covalent intermediate to expel the active-site tyrosine and restore the DNA phosphodiester backbone. The polypeptide is DNA topoisomerase 1 (Methanothermobacter thermautotrophicus (strain ATCC 29096 / DSM 1053 / JCM 10044 / NBRC 100330 / Delta H) (Methanobacterium thermoautotrophicum)).